Reading from the N-terminus, the 306-residue chain is Homoserine kinase (306 aa).

88-98 contributes to the ATP binding site; it reads PLARGLGSSAT.

Belongs to the GHMP kinase family. Homoserine kinase subfamily.

Its subcellular location is the cytoplasm. The enzyme catalyses L-homoserine + ATP = O-phospho-L-homoserine + ADP + H(+). Its pathway is amino-acid biosynthesis; L-threonine biosynthesis; L-threonine from L-aspartate: step 4/5. Its function is as follows. Catalyzes the ATP-dependent phosphorylation of L-homoserine to L-homoserine phosphate. The chain is Homoserine kinase from Synechococcus sp. (strain ATCC 27144 / PCC 6301 / SAUG 1402/1) (Anacystis nidulans).